The chain runs to 408 residues: Biphenyl dioxygenase system ferredoxin--NAD(+) reductase component (408 aa).

Thr4–Asp35 lines the FAD pocket. Ser145–Glu173 serves as a coordination point for NAD(+).

The protein belongs to the bacterial ring-hydroxylating dioxygenase ferredoxin reductase family. This dioxygenase system consists of four proteins: the two subunits of the hydroxylase component (BphA and BphE), a ferredoxin (BphF) and a ferredoxin reductase (BphG). FAD is required as a cofactor.

It carries out the reaction 2 reduced [2Fe-2S]-[ferredoxin] + NAD(+) + H(+) = 2 oxidized [2Fe-2S]-[ferredoxin] + NADH. It functions in the pathway xenobiotic degradation; biphenyl degradation. Functionally, part of the electron transfer component of biphenyl dioxygenase, transfers electrons from ferredoxin (BphF) to NADH. In Paraburkholderia xenovorans (strain LB400), this protein is Biphenyl dioxygenase system ferredoxin--NAD(+) reductase component (bphG).